The sequence spans 857 residues: Zinc finger protein 574 (857 aa).

14 C2H2-type zinc fingers span residues 15–37 (YVCS…QQSH), 58–80 (YQCL…QELH), 99–121 (YECP…RYTH), 206–228 (YKCS…QGTH), 297–319 (FSCG…QISH), 324–346 (FSCP…LKSH), 352–374 (YLCV…RRSH), 380–401 (FTCE…RRVH), 428–451 (FHCD…RFVH), 457–479 (HKCP…MLTH), 485–507 (YSCT…RLTH), 513–535 (YKCQ…QYVH), 541–563 (YKCN…QYHH), and 569–591 (YKCQ…QLGH). Residues 597 to 619 (HRCRECGTNFPSVQRLQDHRCSK) form a C2H2-type 15; degenerate zinc finger. C2H2-type zinc fingers lie at residues 628–651 (LECP…AAQH), 681–703 (LECS…RRIH), 709–731 (YPCP…RRLH), 737–759 (FKCD…KRIH), and 765–787 (HSCP…RKLH). The segment at 648–678 (AAQHSGNKRSNVSSGKGTPVLPRNKLKGGGG) is disordered. Residues 651-663 (HSGNKRSNVSSGK) are compositionally biased toward polar residues.

Belongs to the krueppel C2H2-type zinc-finger protein family.

It is found in the nucleus. Its function is as follows. May be involved in transcriptional regulation. In Xenopus tropicalis (Western clawed frog), this protein is Zinc finger protein 574 (znf574).